Here is a 285-residue protein sequence, read N- to C-terminus: MDTTTVLDKYTQDLSNLPLEVKHLLQELKNKDVQLQEARKRYQTKDNQIHKFIRANGTLTKHPKEQQIYNKVEEDMVLVKKLQKEKILLANTALFLVSKHLSNFETDIAKLEKDELLPPVDNVMELDTPSSDMNSVINGLSDNLSGTTTPRGHSASTPVADNAANSMLRKAQKRKHALGMKGASGLTRPSKRMKSEDFEDKKYDNDSLSRPNEGPGNNGEDADNNLYCFCQRVSFGEMIGCDNDDCKFEWFHWSCVGITAPPKDDEIWYCPDCAPKMEKRKKKRK.

The stretch at 19–54 (LEVKHLLQELKNKDVQLQEARKRYQTKDNQIHKFIR) forms a coiled coil. Over residues 138–165 (NGLSDNLSGTTTPRGHSASTPVADNAAN) the composition is skewed to polar residues. Residues 138-218 (NGLSDNLSGT…SRPNEGPGNN (81 aa)) form a disordered region. Positions 193–207 (MKSEDFEDKKYDNDS) are enriched in basic and acidic residues. A PHD-type zinc finger spans residues 225–276 (NLYCFCQRVSFGEMIGCDNDDCKFEWFHWSCVGITAPPKDDEIWYCPDCAPK). Zn(2+) is bound by residues cysteine 228, cysteine 230, cysteine 241, cysteine 246, histidine 252, cysteine 255, cysteine 270, and cysteine 273.

This sequence belongs to the ING family. Interacts with H3K4me3 and to a lesser extent with H3K4me2. Component of the NuA4 histone acetyltransferase complex.

It is found in the nucleus. Functionally, component of the NuA4 histone acetyltransferase complex which is involved in transcriptional activation of selected genes principally by acetylation of nucleosomal histone H4 and H2A. The NuA4 complex is also involved in DNA repair. Involved in cell cycle progression and meiosis. The chain is Chromatin modification-related protein YNG2 (YNG2) from Debaryomyces hansenii (strain ATCC 36239 / CBS 767 / BCRC 21394 / JCM 1990 / NBRC 0083 / IGC 2968) (Yeast).